The following is a 179-amino-acid chain: Large ribosomal subunit protein uL10 (179 aa).

The protein belongs to the universal ribosomal protein uL10 family. Part of the ribosomal stalk of the 50S ribosomal subunit. The N-terminus interacts with L11 and the large rRNA to form the base of the stalk. The C-terminus forms an elongated spine to which L12 dimers bind in a sequential fashion forming a multimeric L10(L12)X complex.

In terms of biological role, forms part of the ribosomal stalk, playing a central role in the interaction of the ribosome with GTP-bound translation factors. This is Large ribosomal subunit protein uL10 from Symbiobacterium thermophilum (strain DSM 24528 / JCM 14929 / IAM 14863 / T).